Consider the following 281-residue polypeptide: ATP phosphoribosyltransferase (281 aa).

Belongs to the ATP phosphoribosyltransferase family. Long subfamily. Mg(2+) is required as a cofactor.

It is found in the cytoplasm. The catalysed reaction is 1-(5-phospho-beta-D-ribosyl)-ATP + diphosphate = 5-phospho-alpha-D-ribose 1-diphosphate + ATP. The protein operates within amino-acid biosynthesis; L-histidine biosynthesis; L-histidine from 5-phospho-alpha-D-ribose 1-diphosphate: step 1/9. With respect to regulation, feedback inhibited by histidine. In terms of biological role, catalyzes the condensation of ATP and 5-phosphoribose 1-diphosphate to form N'-(5'-phosphoribosyl)-ATP (PR-ATP). Has a crucial role in the pathway because the rate of histidine biosynthesis seems to be controlled primarily by regulation of HisG enzymatic activity. The sequence is that of ATP phosphoribosyltransferase from Salinispora tropica (strain ATCC BAA-916 / DSM 44818 / JCM 13857 / NBRC 105044 / CNB-440).